The sequence spans 146 residues: Aminoglycoside N(6')-acetyltransferase type 1 (146 aa).

One can recognise an N-acetyltransferase domain in the interval 1–146; the sequence is MNIMPVSESL…RVVYFKKHIG (146 aa). The substrate site is built by tryptophan 22, histidine 25, tyrosine 66, and glutamate 79. 81 to 83 is an acetyl-CoA binding site; that stretch reads IYV. Aspartate 115 serves as a coordination point for substrate. Asparagine 120 contributes to the acetyl-CoA binding site. Glutamate 136 contributes to the substrate binding site.

As to quaternary structure, homodimer.

The catalysed reaction is kanamycin B + acetyl-CoA = N(6')-acetylkanamycin B + CoA + H(+). Functionally, catalyzes the transfer of an acetyl group from acetyl-CoA to the 6'-amino group of aminoglycoside molecules conferring resistance to antibiotics containing the purpurosamine ring including amikacin, kanamycin, tobramycin and netilmicin. The sequence is that of Aminoglycoside N(6')-acetyltransferase type 1 from Acinetobacter genomosp. 13.